The primary structure comprises 154 residues: C-type lectin 16 (154 aa).

The signal sequence occupies residues 1–20; it reads MALSLYLIAVICSLVGFTAS. The C-type lectin domain occupies 27 to 152; sequence DNRFCFPNVV…CASMRRFVCE (126 aa). Cystine bridges form between Cys-46/Cys-151 and Cys-123/Cys-143.

In terms of assembly, (Microbial infection) Interacts with non-structural protein 1 of dengue virus type 2. Interacts with envelope protein E of dengue virus type 2. In terms of tissue distribution, female salivary gland (at protein level). Not detected in female carcass without salivary glands (at protein level). Not detected in male tissues (at protein level).

Its subcellular location is the secreted. Putative lectin. May have a regulatory role in mosquito immunity. Probably suppresses replication of dengue virus type 2 in mosquito salivary glands. In Aedes aegypti (Yellowfever mosquito), this protein is C-type lectin 16.